The sequence spans 73 residues: Large ribosomal subunit protein bL31 (73 aa).

Residues Cys16, Cys18, Cys37, and Cys40 each contribute to the Zn(2+) site.

The protein belongs to the bacterial ribosomal protein bL31 family. Type A subfamily. In terms of assembly, part of the 50S ribosomal subunit. The cofactor is Zn(2+).

Functionally, binds the 23S rRNA. This is Large ribosomal subunit protein bL31 from Pseudomonas fluorescens (strain ATCC BAA-477 / NRRL B-23932 / Pf-5).